The chain runs to 909 residues: Protein NLP1 (909 aa).

Disordered regions lie at residues 51–71, 536–556, 568–605, and 690–745; these read KSLKQTEQSPSASTAMNDNSP, KEDPKELSSGRENSQLDPVPN, ASTPGLRVDIGPSTESASTGGGNMLSSRRPGEKKRAKT, and NSPN…ENTG. Residues 55–70 are compositionally biased toward polar residues; it reads QTEQSPSASTAMNDNS. The 82-residue stretch at 595 to 676 folds into the RWP-RK domain; sequence RRPGEKKRAK…MDSVQGAQGS (82 aa). Polar residues predominate over residues 690–716; sequence NSPNMSSNGPSLKSNEQPSHLNAQTDN. The span at 725 to 745 shows a compositional bias: low complexity; the sequence is RSPSSSCSKSSGSSNNNENTG. The 84-residue stretch at 811–894 folds into the PB1 domain; it reads AIKVKATFGE…HTIKISLNEA (84 aa).

It localises to the nucleus. In terms of biological role, probable transcription factor. The polypeptide is Protein NLP1 (NLP1) (Arabidopsis thaliana (Mouse-ear cress)).